We begin with the raw amino-acid sequence, 178 residues long: Ribosome maturation factor RimM (178 aa).

A PRC barrel domain is found at 101–178 (DGEYYWYQLQ…EMKVEWDADF (78 aa)).

The protein belongs to the RimM family. As to quaternary structure, binds ribosomal protein uS19.

It localises to the cytoplasm. Its function is as follows. An accessory protein needed during the final step in the assembly of 30S ribosomal subunit, possibly for assembly of the head region. Essential for efficient processing of 16S rRNA. May be needed both before and after RbfA during the maturation of 16S rRNA. It has affinity for free ribosomal 30S subunits but not for 70S ribosomes. The protein is Ribosome maturation factor RimM of Pseudomonas fluorescens (strain ATCC BAA-477 / NRRL B-23932 / Pf-5).